The sequence spans 99 residues: Protein S100-Z (99 aa).

EF-hand domains follow at residues 13–48 (IRIF…FLSC) and 50–85 (KETQ…LTVA). Residues S20, E23, K28, E33, D63, N65, D67, E69, and E74 each contribute to the Ca(2+) site.

Belongs to the S-100 family. As to quaternary structure, homodimer. Interacts with S100P. In terms of tissue distribution, highest level of expression in spleen and leukocytes.

In Homo sapiens (Human), this protein is Protein S100-Z.